Consider the following 281-residue polypeptide: Complement C1q tumor necrosis factor-related protein 1 (281 aa).

Residues 1 to 25 form the signal peptide; sequence MGSCAQGFMLGCCLLLAITWGPILS. A disordered region spans residues 35 to 68; the sequence is QEWEETEELPSPLDPVTRPEETREKYSPRQGEDL. Residues 51-66 show a composition bias toward basic and acidic residues; the sequence is TRPEETREKYSPRQGE. N93 carries N-linked (GlcNAc...) asparagine glycosylation. The Collagen-like domain maps to 99 to 140; sequence GEKGDRGDRGLQGKYGKIGSTGPRGHVGPKGQKGSIGAPGNH. Positions 107–136 are disordered; sequence RGLQGKYGKIGSTGPRGHVGPKGQKGSIGA. Residues 141 to 281 form the C1q domain; that stretch reads CKSQYAAFSV…GYLVKPASEP (141 aa).

The protein localises to the secreted. This chain is Complement C1q tumor necrosis factor-related protein 1 (C1qtnf1), found in Mus musculus (Mouse).